A 1469-amino-acid polypeptide reads, in one-letter code: Chromosome condensation protein dpy-27 (1469 aa).

Residues 1-25 (MQPFKRRALTSDDDRPYADTDSMPE) form a disordered region. Residues 9-18 (LTSDDDRPYA) show a composition bias toward basic and acidic residues. Position 122-129 (122-129 (GPNGSGKS)) interacts with ATP. Residues 356–542 (ELEENKDIML…KGTLQTMMAE (187 aa)) adopt a coiled-coil conformation. Positions 621–736 (PGFKGRLGDL…VDSLEEATRI (116 aa)) constitute an SMC hinge domain. Residues 758–781 (GALTGGGKPTTGRIRNDNNPNMSG) are disordered. Coiled-coil stretches lie at residues 805 to 974 (LKLQ…AQLE), 1016 to 1056 (AYQT…DIIE), and 1159 to 1182 (TSAK…RMAR). Positions 1404–1469 (LPEFNRFPPA…VQRRVRRSRH (66 aa)) are disordered. The segment covering 1439 to 1449 (EEEDEEDELIE) has biased composition (acidic residues).

The protein belongs to the SMC family. SMC4 subfamily. As to quaternary structure, component of the dosage compensation complex, which contains the mix-1/SMC2 and dpy-27/SMC4 heterodimer, and three non SMC subunits that probably regulate the complex: dpy-26, capg-1 and dpy-28. Within the complex, interacts with dpy-28, mix-1, dpy-26 and capg-1. Interacts with dpy-21. Interacts with dpy-28; the interaction is required for dpy-28 protein stability and dpy-28 association with the X chromosome. Interacts with smcl-1.

The protein localises to the nucleus. It localises to the chromosome. Its function is as follows. Central component of the condensin I-like dosage compensation complex that associates specifically with hermaphrodite X chromosomes to reduce their gene transcription throughout development. Its strong similarity with the condensin subunit smc4 suggests that it may reduce the X-chromosome transcript level by condensing the chromatin structure during interphase. Involved in the recruitment of the dosage compensation proteins mix-1 and dpy-21 to the X chromosome. Might be involved in the reduction of histone H4 lysine 16 acetylation (H4K16ac) on dosage compensated X chromosomes. As a member of the dosage compensation complex, also binds to regulatory regions of the autosomal her-1 gene, required for male development, possibly contributing to its repression in hermaphrodites. Also plays a role in the regulation of growth and body fat metabolism downstream of the TOR complex 2 pathway. This Caenorhabditis elegans protein is Chromosome condensation protein dpy-27 (dpy-27).